The sequence spans 546 residues: Pectinesterase 1 (546 aa).

The signal sequence occupies residues 1–39 (MANPQQPLLIKTHKQNPIISFKILSFVITLFVALFLVAP). The propeptide occupies 40 to 229 (YQVEIKHSNL…RKLMESSGKD (190 aa)). Substrate contacts are provided by T308 and Q338. A disulfide bridge connects residues C327 and C354. The active-site Proton donor is the D361. D382 acts as the Nucleophile in catalysis. C395 and C429 are oxidised to a cystine. The substrate site is built by R450 and W452.

In the N-terminal section; belongs to the PMEI family. This sequence in the C-terminal section; belongs to the pectinesterase family.

It is found in the secreted. Its subcellular location is the cell wall. It catalyses the reaction [(1-&gt;4)-alpha-D-galacturonosyl methyl ester](n) + n H2O = [(1-&gt;4)-alpha-D-galacturonosyl](n) + n methanol + n H(+). It participates in glycan metabolism; pectin degradation; 2-dehydro-3-deoxy-D-gluconate from pectin: step 1/5. Its function is as follows. Pectinesterase may play a role in cell wall metabolism during fruit growth and development prior to ripening and may be required for preparing cell walls for softening by polygalacturonase during fruit ripening. This is Pectinesterase 1 (PME1.9) from Solanum lycopersicum (Tomato).